Consider the following 96-residue polypeptide: MSDYGIALGMIETRGLVPAIEAADAMTKAAEVRLVSREFVGGGYVTVLVRGETGAVNAAVRAGADACERVGDGLVAAHIIARPHKEVEPVLTMEQK.

Positions 7 to 92 (ALGMIETRGL…PHKEVEPVLT (86 aa)) constitute a BMC domain.

Belongs to the bacterial microcompartments protein family. CsoS1 subfamily. Homohexamer with a small central pore. Forms a CsoS2-CsoS1-RuBisCO complex.

It localises to the carboxysome. One of shell proteins of the carboxysome, a polyhedral inclusion where RuBisCO (ribulose bisphosphate carboxylase, ccbL-ccbS) is sequestered. Assembles into hexamers which make sheets that form the facets of the polyhedral carboxysome. The shell probably limits the diffusion of CO(2) into and out of the carboxysome. This Hydrogenovibrio crunogenus (strain DSM 25203 / XCL-2) (Thiomicrospira crunogena) protein is Carboxysome shell protein CsoS1A.